The following is a 326-amino-acid chain: Porphobilinogen deaminase (326 aa).

Cys-251 is modified (S-(dipyrrolylmethanemethyl)cysteine).

This sequence belongs to the HMBS family. It depends on dipyrromethane as a cofactor.

The enzyme catalyses 4 porphobilinogen + H2O = hydroxymethylbilane + 4 NH4(+). Its pathway is porphyrin-containing compound metabolism; protoporphyrin-IX biosynthesis; coproporphyrinogen-III from 5-aminolevulinate: step 2/4. Tetrapolymerization of the monopyrrole PBG into the hydroxymethylbilane pre-uroporphyrinogen in several discrete steps. The chain is Porphobilinogen deaminase (HEM3) from Eremothecium gossypii (strain ATCC 10895 / CBS 109.51 / FGSC 9923 / NRRL Y-1056) (Yeast).